A 458-amino-acid chain; its full sequence is tRNA-2-methylthio-N(6)-dimethylallyladenosine synthase (458 aa).

Positions 15 to 134 constitute an MTTase N-terminal domain; the sequence is KKVFIKTYGC…LPELLQQAQQ (120 aa). The [4Fe-4S] cluster site is built by Cys24, Cys60, Cys97, Cys175, Cys179, and Cys182. A Radical SAM core domain is found at 161 to 393; it reads QKRGVSAFLT…QALLLDQQHR (233 aa). Residues 396-457 form the TRAM domain; sequence RSKIGQTTDV…SNSFVGEKAN (62 aa).

Belongs to the methylthiotransferase family. MiaB subfamily. In terms of assembly, monomer. Requires [4Fe-4S] cluster as cofactor.

It localises to the cytoplasm. The enzyme catalyses N(6)-dimethylallyladenosine(37) in tRNA + (sulfur carrier)-SH + AH2 + 2 S-adenosyl-L-methionine = 2-methylsulfanyl-N(6)-dimethylallyladenosine(37) in tRNA + (sulfur carrier)-H + 5'-deoxyadenosine + L-methionine + A + S-adenosyl-L-homocysteine + 2 H(+). Functionally, catalyzes the methylthiolation of N6-(dimethylallyl)adenosine (i(6)A), leading to the formation of 2-methylthio-N6-(dimethylallyl)adenosine (ms(2)i(6)A) at position 37 in tRNAs that read codons beginning with uridine. This Bartonella bacilliformis (strain ATCC 35685 / KC583 / Herrer 020/F12,63) protein is tRNA-2-methylthio-N(6)-dimethylallyladenosine synthase.